A 167-amino-acid chain; its full sequence is UPF0598 protein CG30010 (167 aa).

It belongs to the UPF0598 family.

This chain is UPF0598 protein CG30010, found in Drosophila melanogaster (Fruit fly).